The following is a 253-amino-acid chain: uncharacterized protein (253 aa).

The span at 200 to 209 (TGREHAHKGP) shows a compositional bias: basic and acidic residues. Disordered regions lie at residues 200–225 (TGRE…PNPA) and 234–253 (QHSP…SAAT).

In terms of tissue distribution, most abundantly expressed in gastrointestinal tissues. Expressed at lower levels in kidney and placenta. Expressed in fetal brain, liver, placenta, kidney and lung.

This is an uncharacterized protein from Homo sapiens (Human).